Consider the following 469-residue polypeptide: 3-isopropylmalate dehydratase large subunit (469 aa).

The [4Fe-4S] cluster site is built by Cys350, Cys410, and Cys413.

It belongs to the aconitase/IPM isomerase family. LeuC type 1 subfamily. As to quaternary structure, heterodimer of LeuC and LeuD. The cofactor is [4Fe-4S] cluster.

It carries out the reaction (2R,3S)-3-isopropylmalate = (2S)-2-isopropylmalate. Its pathway is amino-acid biosynthesis; L-leucine biosynthesis; L-leucine from 3-methyl-2-oxobutanoate: step 2/4. Its function is as follows. Catalyzes the isomerization between 2-isopropylmalate and 3-isopropylmalate, via the formation of 2-isopropylmaleate. The polypeptide is 3-isopropylmalate dehydratase large subunit (Rhizobium etli (strain CIAT 652)).